Consider the following 657-residue polypeptide: N-acetylgalactosaminyltransferase 7 (657 aa).

At 1–6 (MRLKIG) the chain is on the cytoplasmic side. A helical; Signal-anchor for type II membrane protein transmembrane segment spans residues 7–29 (FILRSLLVVGSFLGLVVLWSSLS). The tract at residues 30–66 (SRPDDPSPLSRMREDRDVNNPLPNRGGNGLAPGDDRF) is disordered. The Lumenal portion of the chain corresponds to 30 to 657 (SRPDDPSPLS…KWEMNNIHSV (628 aa)). Cystine bridges form between Cys197–Cys435, Cys426–Cys507, Cys545–Cys562, Cys585–Cys600, and Cys625–Cys640. The tract at residues 206-317 (LLTSSVVIVF…VNWYAPLVAP (112 aa)) is catalytic subdomain A. Residues Asp247 and Arg277 each contribute to the substrate site. Positions 301 and 303 each coordinate Mn(2+). The catalytic subdomain B stretch occupies residues 381-443 (PYRSPAMAGG…PCSRVGHIYR (63 aa)). Trp412 provides a ligand contact to substrate. Position 440 (His440) interacts with Mn(2+). Arg443 contacts substrate. The 121-residue stretch at 532–652 (VEWGEIRGLE…GKMTQKWEMN (121 aa)) folds into the Ricin B-type lectin domain.

Belongs to the glycosyltransferase 2 family. GalNAc-T subfamily. Mn(2+) serves as cofactor. As to expression, highly expressed in sublingual gland. Expressed at lower level in stomach, small intestiine and colon.

It is found in the golgi apparatus membrane. The catalysed reaction is L-seryl-[protein] + UDP-N-acetyl-alpha-D-galactosamine = a 3-O-[N-acetyl-alpha-D-galactosaminyl]-L-seryl-[protein] + UDP + H(+). The enzyme catalyses L-threonyl-[protein] + UDP-N-acetyl-alpha-D-galactosamine = a 3-O-[N-acetyl-alpha-D-galactosaminyl]-L-threonyl-[protein] + UDP + H(+). It participates in protein modification; protein glycosylation. In terms of biological role, glycopeptide transferase involved in O-linked oligosaccharide biosynthesis, which catalyzes the transfer of an N-acetyl-D-galactosamine residue to an already glycosylated peptide. In contrast to other proteins of the family, it does not act as a peptide transferase that transfers GalNAc onto serine or threonine residue on the protein receptor, but instead requires the prior addition of a GalNAc on a peptide before adding additional GalNAc moieties. Some peptide transferase activity is however not excluded, considering that its appropriate peptide substrate may remain unidentified. This chain is N-acetylgalactosaminyltransferase 7 (Galnt7), found in Rattus norvegicus (Rat).